The chain runs to 335 residues: Large ribosomal subunit protein uL10 (335 aa).

The interval 306–335 (VEETVEEEEEEEEEEDAEEEAAAGLGALFG) is disordered. The span at 308–326 (ETVEEEEEEEEEEDAEEEA) shows a compositional bias: acidic residues.

Belongs to the universal ribosomal protein uL10 family. In terms of assembly, part of the 50S ribosomal subunit. Forms part of the ribosomal stalk which helps the ribosome interact with GTP-bound translation factors. Forms a heptameric L10(L12)2(L12)2(L12)2 complex, where L10 forms an elongated spine to which the L12 dimers bind in a sequential fashion.

Its function is as follows. Forms part of the ribosomal stalk, playing a central role in the interaction of the ribosome with GTP-bound translation factors. This is Large ribosomal subunit protein uL10 from Methanobrevibacter smithii (strain ATCC 35061 / DSM 861 / OCM 144 / PS).